We begin with the raw amino-acid sequence, 150 residues long: Small ribosomal subunit protein uS15 (150 aa).

The disordered stretch occupies residues 1–22; that stretch reads MNKRREKGQSHSTRPPHPQPPQ.

Belongs to the universal ribosomal protein uS15 family. In terms of assembly, part of the 30S ribosomal subunit.

This Aeropyrum pernix (strain ATCC 700893 / DSM 11879 / JCM 9820 / NBRC 100138 / K1) protein is Small ribosomal subunit protein uS15.